Here is a 282-residue protein sequence, read N- to C-terminus: Urease accessory protein UreD (282 aa).

Belongs to the UreD family. In terms of assembly, ureD, UreF and UreG form a complex that acts as a GTP-hydrolysis-dependent molecular chaperone, activating the urease apoprotein by helping to assemble the nickel containing metallocenter of UreC. The UreE protein probably delivers the nickel.

It is found in the cytoplasm. In terms of biological role, required for maturation of urease via the functional incorporation of the urease nickel metallocenter. This Methylobacterium sp. (strain 4-46) protein is Urease accessory protein UreD.